The chain runs to 359 residues: DNA polymerase IV (359 aa).

In terms of domain architecture, UmuC spans 4 to 184; that stretch reads IVHVDMDAFY…LPVNRIPGVG (181 aa). Positions 8 and 102 each coordinate Mg(2+). The active site involves glutamate 103.

The protein belongs to the DNA polymerase type-Y family. Monomer. Requires Mg(2+) as cofactor.

The protein resides in the cytoplasm. It catalyses the reaction DNA(n) + a 2'-deoxyribonucleoside 5'-triphosphate = DNA(n+1) + diphosphate. Poorly processive, error-prone DNA polymerase involved in untargeted mutagenesis. Copies undamaged DNA at stalled replication forks, which arise in vivo from mismatched or misaligned primer ends. These misaligned primers can be extended by PolIV. Exhibits no 3'-5' exonuclease (proofreading) activity. May be involved in translesional synthesis, in conjunction with the beta clamp from PolIII. The chain is DNA polymerase IV from Xanthomonas campestris pv. campestris (strain 8004).